The following is a 210-amino-acid chain: Large ribosomal subunit protein uL3 (210 aa).

It belongs to the universal ribosomal protein uL3 family. In terms of assembly, part of the 50S ribosomal subunit. Forms a cluster with proteins L14 and L19.

Its function is as follows. One of the primary rRNA binding proteins, it binds directly near the 3'-end of the 23S rRNA, where it nucleates assembly of the 50S subunit. This chain is Large ribosomal subunit protein uL3, found in Natranaerobius thermophilus (strain ATCC BAA-1301 / DSM 18059 / JW/NM-WN-LF).